Consider the following 296-residue polypeptide: Malate--CoA ligase subunit alpha (296 aa).

Residues 17–20 (TGDK), lysine 43, and 96–98 (ITD) contribute to the CoA site. Catalysis depends on histidine 251, which acts as the Tele-phosphohistidine intermediate.

It belongs to the succinate/malate CoA ligase alpha subunit family. Heterotetramer of two alpha and two beta subunits.

It carries out the reaction (S)-malate + ATP + CoA = (S)-malyl-CoA + ADP + phosphate. The protein operates within one-carbon metabolism; formaldehyde assimilation via serine pathway. This is Malate--CoA ligase subunit alpha (mtkB) from Methylorubrum extorquens (strain ATCC 14718 / DSM 1338 / JCM 2805 / NCIMB 9133 / AM1) (Methylobacterium extorquens).